The primary structure comprises 372 residues: tRNA-specific 2-thiouridylase MnmA (372 aa).

Residues 11–18 and M37 each bind ATP; that span reads GMSGGVDS. The segment at 97-99 is interaction with target base in tRNA; it reads NPD. The active-site Nucleophile is C102. Cysteines 102 and 199 form a disulfide. G126 is an ATP binding site. Residues 149–151 are interaction with tRNA; sequence KDQ. Catalysis depends on C199, which acts as the Cysteine persulfide intermediate. The interval 309-310 is interaction with tRNA; sequence RY.

It belongs to the MnmA/TRMU family.

The protein localises to the cytoplasm. The enzyme catalyses S-sulfanyl-L-cysteinyl-[protein] + uridine(34) in tRNA + AH2 + ATP = 2-thiouridine(34) in tRNA + L-cysteinyl-[protein] + A + AMP + diphosphate + H(+). In terms of biological role, catalyzes the 2-thiolation of uridine at the wobble position (U34) of tRNA, leading to the formation of s(2)U34. The chain is tRNA-specific 2-thiouridylase MnmA from Staphylococcus epidermidis (strain ATCC 35984 / DSM 28319 / BCRC 17069 / CCUG 31568 / BM 3577 / RP62A).